The primary structure comprises 151 residues: Small ribosomal subunit protein uS15z (151 aa).

It belongs to the universal ribosomal protein uS15 family.

The protein is Small ribosomal subunit protein uS15z of Oryza sativa subsp. japonica (Rice).